A 131-amino-acid polypeptide reads, in one-letter code: Universal stress protein C (131 aa).

It belongs to the universal stress protein A family.

Its subcellular location is the cytoplasm. Its function is as follows. Required for resistance to DNA-damaging agents. The chain is Universal stress protein C (uspC) from Salmonella typhi.